The chain runs to 1051 residues: Lateral signaling target protein 2 homolog (1051 aa).

Disordered regions lie at residues 305 to 440 (PLGS…DEDL), 516 to 552 (GSNA…PSTS), 566 to 703 (HLPS…NASS), and 837 to 968 (IDLA…DGKA). Low complexity predominate over residues 319-358 (NNTSSSTSNNNNNNNNNSSSSSSSSSGSGSNTAKTSTSST). Residues 360–370 (KAVERLVDHRN) are compositionally biased toward basic and acidic residues. A compositionally biased stretch (polar residues) spans 371–391 (NNSSTVAGATQPSTARSPSML). 2 stretches are compositionally biased toward low complexity: residues 392–401 (SLSAGSTPTA) and 409–428 (PSHS…NPPA). Residues 518 to 528 (NAATERQQQQQ) show a composition bias toward polar residues. Composition is skewed to low complexity over residues 533-549 (LQPG…QDEP) and 568-582 (PSSS…SSNQ). Serine 569 and serine 570 each carry phosphoserine. Positions 583 to 596 (QTTIKTPNGNQSMP) are enriched in polar residues. Low complexity predominate over residues 597–606 (NSSSSSSNHN). Composition is skewed to basic residues over residues 607–637 (NNRH…HPHH) and 650–672 (HHHH…ARKR). Polar residues predominate over residues 692–703 (TPGSADTSNASS). The segment covering 840 to 852 (ASGNNNGNSNAAA) has biased composition (low complexity). Serine 861 bears the Phosphoserine mark. Composition is skewed to low complexity over residues 879-924 (QQQQ…SPIS) and 937-960 (SSIG…MSPP). The FYVE-type zinc-finger motif lies at 965–1025 (DGKAPRCMSC…VCRECYVREV (61 aa)). Positions 971, 974, 987, 990, 995, 998, 1017, and 1020 each coordinate Zn(2+). The disordered stretch occupies residues 1028–1051 (SRQAPAQPSQAHGQASRPQAASAS).

The protein belongs to the lst-2 family.

In terms of biological role, negative regulator of epidermal growth factor receptor (EGFR) signaling. The polypeptide is Lateral signaling target protein 2 homolog (Drosophila mojavensis (Fruit fly)).